We begin with the raw amino-acid sequence, 298 residues long: Cell wall protein DAN1 (298 aa).

The N-terminal stretch at 1–19 (MSRISILAVAAALVASATA) is a signal peptide. The segment at 122-168 (PASTTEASSTSTSEASSAATESSSSSESSAETSSNAASTQATVSSES) is disordered. Asn275 is lipidated: GPI-anchor amidated asparagine. Positions 276 to 298 (GANKFNNGVFGAAAIAGAAALLL) are cleaved as a propeptide — removed in mature form.

It belongs to the SRP1/TIP1 family. In terms of processing, extensively O-glycosylated. The GPI-anchor is attached to the protein in the endoplasmic reticulum and serves to target the protein to the cell surface. There, the glucosamine-inositol phospholipid moiety is cleaved off and the GPI-modified mannoprotein is covalently attached via its lipidless GPI glycan remnant to the 1,6-beta-glucan of the outer cell wall layer.

Its subcellular location is the secreted. It localises to the cell wall. The protein resides in the membrane. Its function is as follows. Component of the cell wall. The protein is Cell wall protein DAN1 (DAN1) of Saccharomyces cerevisiae (strain ATCC 204508 / S288c) (Baker's yeast).